The sequence spans 369 residues: Aminomethyltransferase (369 aa).

It belongs to the GcvT family. The glycine cleavage system is composed of four proteins: P, T, L and H.

The enzyme catalyses N(6)-[(R)-S(8)-aminomethyldihydrolipoyl]-L-lysyl-[protein] + (6S)-5,6,7,8-tetrahydrofolate = N(6)-[(R)-dihydrolipoyl]-L-lysyl-[protein] + (6R)-5,10-methylene-5,6,7,8-tetrahydrofolate + NH4(+). In terms of biological role, the glycine cleavage system catalyzes the degradation of glycine. In Synechococcus sp. (strain WH7803), this protein is Aminomethyltransferase.